Here is a 193-residue protein sequence, read N- to C-terminus: Peptidyl-tRNA hydrolase (193 aa).

Position 17 (Tyr17) interacts with tRNA. Residue His22 is the Proton acceptor of the active site. The tRNA site is built by Phe68, Asn70, and Asn116.

This sequence belongs to the PTH family. Monomer.

The protein resides in the cytoplasm. It carries out the reaction an N-acyl-L-alpha-aminoacyl-tRNA + H2O = an N-acyl-L-amino acid + a tRNA + H(+). In terms of biological role, hydrolyzes ribosome-free peptidyl-tRNAs (with 1 or more amino acids incorporated), which drop off the ribosome during protein synthesis, or as a result of ribosome stalling. Catalyzes the release of premature peptidyl moieties from peptidyl-tRNA molecules trapped in stalled 50S ribosomal subunits, and thus maintains levels of free tRNAs and 50S ribosomes. The chain is Peptidyl-tRNA hydrolase from Acinetobacter baylyi (strain ATCC 33305 / BD413 / ADP1).